Here is a 206-residue protein sequence, read N- to C-terminus: Cell division protein SepF (206 aa).

The segment covering 31 to 53 (EEKERRKTERQEQRQAVKQEKRT) has biased composition (basic and acidic residues). The interval 31-81 (EEKERRKTERQEQRQAVKQEKRTFPSQRPAFSEEAPTSSSSKLSAASGSSD) is disordered. The span at 60 to 80 (AFSEEAPTSSSSKLSAASGSS) shows a compositional bias: low complexity.

It belongs to the SepF family. Homodimer. Interacts with FtsZ.

It localises to the cytoplasm. In terms of biological role, cell division protein that is part of the divisome complex and is recruited early to the Z-ring. Probably stimulates Z-ring formation, perhaps through the cross-linking of FtsZ protofilaments. Its function overlaps with FtsA. The protein is Cell division protein SepF of Lachnoclostridium phytofermentans (strain ATCC 700394 / DSM 18823 / ISDg) (Clostridium phytofermentans).